The sequence spans 529 residues: Delayed-rectifier potassium channel regulatory subunit KCNS1 (529 aa).

Topologically, residues 1–217 (MLMLLVRGTR…LTMENPGYSL (217 aa)) are cytoplasmic. The chain crosses the membrane as a helical span at residues 218 to 239 (PSKLFSCVSISVVLASIAAMCI). The Extracellular segment spans residues 240–270 (HSLPEYQAREAAAAVAAVAAGRSPEGVRDDP). Residues 271–293 (VLRRLEYFCIAWFSFEVSSRLLL) form a helical membrane-spanning segment. Over 294–304 (APSTRNFFCHP) the chain is Cytoplasmic. The helical transmembrane segment at 305-322 (LNLIDIVSVLPFYLTLLA) threads the bilayer. The Extracellular portion of the chain corresponds to 323 to 340 (GVALGDQGGTGGKELGHL). Residues 341-361 (GKVVQVFRLMRIFRVLKLARH) traverse the membrane as a helical; Voltage-sensor segment. The Cytoplasmic portion of the chain corresponds to 362 to 376 (STGLRSLGATLKHSY). A helical membrane pass occupies residues 377-398 (REVGILLLYLAVGVSVFSGVAY). Residues 399-411 (TAEKEEDVGFNTI) are Extracellular-facing. The helical intramembrane region spans 412 to 423 (PACWWWGTVSMT). The short motif at 424 to 429 (TVGYGD) is the Selectivity filter element. Residues 424–431 (TVGYGDVV) lie within the membrane without spanning it. Topologically, residues 432–438 (PVTVAGK) are extracellular. The helical transmembrane segment at 439-467 (LAASGCILGGILVVALPITIIFNKFSHFY) threads the bilayer. At 468–529 (RRQKALEAAV…PSEPPHPQMY (62 aa)) the chain is on the cytoplasmic side. The interval 500–529 (LETSREISQEGRSADLETQAPSEPPHPQMY) is disordered. Residues 502–514 (TSREISQEGRSAD) are compositionally biased toward basic and acidic residues.

The protein belongs to the potassium channel family. S (TC 1.A.1.2) subfamily. Kv9.1/KCNS1 sub-subfamily. As to quaternary structure, heterotetramer with KCNB1. Heterotetramer with KCNB2. Does not form homomultimers.

The protein resides in the cell membrane. Functionally, potassium channel regulatory subunit that modulate the delayed rectifier voltage-gated potassium channel activity of KCNB1 and KCNB2 by altering their kinetics, expression levels, and shifting the half-inactivation potential to more polarized values. While it does not form functional channels on its own, it can form functional heterotetrameric channels with KCNB1 and KCNB2. Each regulatory subunit has unique regulatory properties that can lead to extensive inhibition, significant changes in kinetics, and/or substantial shifts in the voltage dependencies of the inactivation process. This chain is Delayed-rectifier potassium channel regulatory subunit KCNS1, found in Colobus guereza (Mantled guereza).